We begin with the raw amino-acid sequence, 339 residues long: U11/U12 small nuclear ribonucleoprotein 48 kDa protein (339 aa).

Residues 55–82 form a CHHC U11-48K-type zinc finger; it reads VVICPYDSNHHMPKSSLAKHMASCRLRK. Zn(2+) contacts are provided by cysteine 58, histidine 64, histidine 74, and cysteine 78. Glycyl lysine isopeptide (Lys-Gly) (interchain with G-Cter in SUMO2) cross-links involve residues lysine 87 and lysine 104. The disordered stretch occupies residues 255–339; sequence HWQEEQEKAE…HSHKRRKQKI (85 aa). The segment covering 294 to 309 has biased composition (basic residues); sequence RHRRDRSRSPHKRKRN. Residues 310–328 are compositionally biased toward basic and acidic residues; sequence KDKDKNCESRRRKERDGER. A compositionally biased stretch (basic residues) spans 329 to 339; it reads HHSHKRRKQKI.

In terms of assembly, component of the U11/U12 snRNPs that are part of the U12-type spliceosome. Not found in the major spliceosome.

The protein resides in the nucleus. Functionally, likely involved in U12-type 5' splice site recognition. The protein is U11/U12 small nuclear ribonucleoprotein 48 kDa protein (SNRNP48) of Homo sapiens (Human).